The primary structure comprises 516 residues: Putative transposase y4bL/y4kJ/y4tB (516 aa).

The 82-residue stretch at Ile15–Leu96 folds into the HTH IS408-type domain. Positions Phe138 to Glu319 constitute an Integrase catalytic domain. The interval Glu493–Gln516 is disordered.

It belongs to the transposase IS21/IS408/IS1162 family.

This is Putative transposase y4bL/y4kJ/y4tB from Sinorhizobium fredii (strain NBRC 101917 / NGR234).